The primary structure comprises 428 residues: Adenylosuccinate synthetase (428 aa).

GTP is bound by residues 12 to 18 (GDEGKGK) and 40 to 42 (GHS). Catalysis depends on Asp-13, which acts as the Proton acceptor. Positions 13 and 40 each coordinate Mg(2+). IMP contacts are provided by residues 13–16 (DEGK), 38–41 (NAGH), Thr-128, Arg-142, Gln-223, Thr-238, and Arg-302. The Proton donor role is filled by His-41. 298–304 (VTTGRPR) serves as a coordination point for substrate. GTP is bound by residues Arg-304, 330-332 (KLD), and 412-414 (GTG).

Belongs to the adenylosuccinate synthetase family. As to quaternary structure, homodimer. It depends on Mg(2+) as a cofactor.

Its subcellular location is the cytoplasm. It catalyses the reaction IMP + L-aspartate + GTP = N(6)-(1,2-dicarboxyethyl)-AMP + GDP + phosphate + 2 H(+). It participates in purine metabolism; AMP biosynthesis via de novo pathway; AMP from IMP: step 1/2. Functionally, plays an important role in the de novo pathway of purine nucleotide biosynthesis. Catalyzes the first committed step in the biosynthesis of AMP from IMP. The chain is Adenylosuccinate synthetase from Bifidobacterium longum (strain NCC 2705).